Here is a 228-residue protein sequence, read N- to C-terminus: RING1 and YY1-binding protein (228 aa).

Disordered stretches follow at residues 1 to 21, 65 to 156, and 172 to 228; these read MTMG…PAAD, QVAQ…RSTA, and DFKE…DESF. Residues 21–50 form a RanBP2-type zinc finger; that stretch reads DEGFWDCSVCTFRNSAEAFKCSICDVRKGT. The span at 76 to 98 shows a compositional bias: basic and acidic residues; it reads PKKEKKEKVEKQDKEKPEKDKEI. Residue Lys77 forms a Glycyl lysine isopeptide (Lys-Gly) (interchain with G-Cter in SUMO2) linkage. Ser99 bears the Phosphoserine mark. Residues 113–122 are compositionally biased toward basic and acidic residues; it reads PKSDILKDPP. Phosphoserine is present on residues Ser123, Ser127, and Ser130. Over residues 124–143 the composition is skewed to polar residues; the sequence is EANSIQSANATTKTSETNHT. Residues 143-226 form an interaction with GABPB1 and FANK1 region; that stretch reads TSRPRLKNVD…KGDMSAVNDE (84 aa). Over residues 179 to 204 the composition is skewed to low complexity; it reads SSSTSSSTVTSSAGSEQQNQSSSGSE. The residue at position 227 (Ser227) is a Phosphoserine.

In terms of assembly, monomer. Component of repressive BCOR complex containing Polycomb group subcomplex at least composed of BCOR, PCGF1, RING1 and RNF2/RING2. Component of PCR1-like complexes. Interacts with PCGF1. Part of a PCR1-like complex that contains AUTS2, PCGF5, RNF2, CSNK2B and RYBP. Interacts with RNF2; the interaction is direct. Interacts with CBX2, YAF2, RING1 and RNF2. Interacts with ubiquitin and ubiquitinated proteins. Interacts with ubiquitinated histone H2A. Interacts with apoptin, DEDD, FADD, CASP8, CASP10, YY1 and GABPB1. Together with GABPB1 and YY1, it forms a ternary complex, probably being the bridge factor between these two transcription factors. Interacts with MDM2, and thereby inhibits ubiquitination of TP53. Identified in a ternary complex containing MDM2, TP53 and RYBP. Interacts with FANK1; may prevent the ubiquitin-mediated proteasomal degradation of FANK1. Interacts with IFT57. Monoubiquitinated. In terms of tissue distribution, down-regulated in breast cancer tissues and in several breast cancer cell lines (at protein level). Widely expressed with highest levels in lymphoid tissues and placenta.

Its subcellular location is the nucleus. The protein resides in the cytoplasm. The protein localises to the nucleoplasm. Functionally, component of a Polycomb group (PcG) multiprotein PRC1-like complex, a complex class required to maintain the transcriptionally repressive state of many genes, including Hox genes, throughout development. PcG PRC1-like complex acts via chromatin remodeling and modification of histones; it mediates monoubiquitination of histone H2A 'Lys-119', rendering chromatin heritably changed in its expressibility. Component of a PRC1-like complex that mediates monoubiquitination of histone H2A 'Lys-119' on the X chromosome and is required for normal silencing of one copy of the X chromosome in XX females. May stimulate ubiquitination of histone H2A 'Lys-119' by recruiting the complex to target sites. Inhibits ubiquitination and subsequent degradation of TP53, and thereby plays a role in regulating transcription of TP53 target genes. May also regulate the ubiquitin-mediated proteasomal degradation of other proteins like FANK1 to regulate apoptosis. May be implicated in the regulation of the transcription as a repressor of the transcriptional activity of E4TF1. May bind to DNA. May play a role in the repression of tumor growth and metastasis in breast cancer by down-regulating SRRM3. The chain is RING1 and YY1-binding protein (RYBP) from Homo sapiens (Human).